Reading from the N-terminus, the 455-residue chain is Bifunctional protein GlmU (455 aa).

Residues 1–226 form a pyrophosphorylase region; the sequence is MSLDIVILAA…AMEVQGANDR (226 aa). UDP-N-acetyl-alpha-D-glucosamine-binding positions include 8–11, lysine 22, glutamine 73, 78–79, 99–101, glycine 136, glutamate 151, asparagine 166, and asparagine 224; these read LAAG, GT, and YGD. Residue aspartate 101 participates in Mg(2+) binding. Residue asparagine 224 participates in Mg(2+) binding. The tract at residues 227–247 is linker; sequence KQLSELERHYQLREARRLMAA. Positions 248-455 are N-acetyltransferase; that stretch reads GVTLRDPSRF…WKRPVKITKD (208 aa). 2 residues coordinate UDP-N-acetyl-alpha-D-glucosamine: arginine 330 and lysine 348. The Proton acceptor role is filled by histidine 360. Tyrosine 363 and asparagine 374 together coordinate UDP-N-acetyl-alpha-D-glucosamine. Acetyl-CoA-binding positions include alanine 377, 383–384, serine 402, alanine 420, and arginine 437; that span reads NY.

It in the N-terminal section; belongs to the N-acetylglucosamine-1-phosphate uridyltransferase family. The protein in the C-terminal section; belongs to the transferase hexapeptide repeat family. In terms of assembly, homotrimer. It depends on Mg(2+) as a cofactor.

It localises to the cytoplasm. It carries out the reaction alpha-D-glucosamine 1-phosphate + acetyl-CoA = N-acetyl-alpha-D-glucosamine 1-phosphate + CoA + H(+). It catalyses the reaction N-acetyl-alpha-D-glucosamine 1-phosphate + UTP + H(+) = UDP-N-acetyl-alpha-D-glucosamine + diphosphate. The protein operates within nucleotide-sugar biosynthesis; UDP-N-acetyl-alpha-D-glucosamine biosynthesis; N-acetyl-alpha-D-glucosamine 1-phosphate from alpha-D-glucosamine 6-phosphate (route II): step 2/2. Its pathway is nucleotide-sugar biosynthesis; UDP-N-acetyl-alpha-D-glucosamine biosynthesis; UDP-N-acetyl-alpha-D-glucosamine from N-acetyl-alpha-D-glucosamine 1-phosphate: step 1/1. It participates in bacterial outer membrane biogenesis; LPS lipid A biosynthesis. Catalyzes the last two sequential reactions in the de novo biosynthetic pathway for UDP-N-acetylglucosamine (UDP-GlcNAc). The C-terminal domain catalyzes the transfer of acetyl group from acetyl coenzyme A to glucosamine-1-phosphate (GlcN-1-P) to produce N-acetylglucosamine-1-phosphate (GlcNAc-1-P), which is converted into UDP-GlcNAc by the transfer of uridine 5-monophosphate (from uridine 5-triphosphate), a reaction catalyzed by the N-terminal domain. This is Bifunctional protein GlmU from Pseudomonas syringae pv. tomato (strain ATCC BAA-871 / DC3000).